Consider the following 628-residue polypeptide: Biosynthetic arginine decarboxylase (628 aa).

K101 is modified (N6-(pyridoxal phosphate)lysine). Position 281-291 (281-291 (VDVGGGLGVDY)) interacts with substrate.

Belongs to the Orn/Lys/Arg decarboxylase class-II family. SpeA subfamily. Mg(2+) is required as a cofactor. Pyridoxal 5'-phosphate serves as cofactor.

The catalysed reaction is L-arginine + H(+) = agmatine + CO2. It participates in amine and polyamine biosynthesis; agmatine biosynthesis; agmatine from L-arginine: step 1/1. Its function is as follows. Catalyzes the biosynthesis of agmatine from arginine. This chain is Biosynthetic arginine decarboxylase, found in Alkalilimnicola ehrlichii (strain ATCC BAA-1101 / DSM 17681 / MLHE-1).